Consider the following 154-residue polypeptide: Transcriptional repressor NrdR (154 aa).

Residues Cys3–Cys34 fold into a zinc finger. Residues Pro49 to Glu139 enclose the ATP-cone domain.

This sequence belongs to the NrdR family. Requires Zn(2+) as cofactor.

In terms of biological role, negatively regulates transcription of bacterial ribonucleotide reductase nrd genes and operons by binding to NrdR-boxes. The chain is Transcriptional repressor NrdR from Pseudomonas aeruginosa (strain LESB58).